A 216-amino-acid polypeptide reads, in one-letter code: Orotidine 5'-phosphate decarboxylase (216 aa).

Substrate is bound by residues D12, K34, 62–71 (DFKVADIDAT), S119, 172–182 (PGVGFQGGNAK), G194, and R195. The active-site Proton donor is the K64.

It belongs to the OMP decarboxylase family. Type 1 subfamily. In terms of assembly, homodimer.

It catalyses the reaction orotidine 5'-phosphate + H(+) = UMP + CO2. It functions in the pathway pyrimidine metabolism; UMP biosynthesis via de novo pathway; UMP from orotate: step 2/2. Its function is as follows. Catalyzes the decarboxylation of orotidine 5'-monophosphate (OMP) to uridine 5'-monophosphate (UMP). The protein is Orotidine 5'-phosphate decarboxylase of Methanosphaera stadtmanae (strain ATCC 43021 / DSM 3091 / JCM 11832 / MCB-3).